A 357-amino-acid chain; its full sequence is Probable dual-specificity RNA methyltransferase RlmN (357 aa).

The active-site Proton acceptor is Glu95. The Radical SAM core domain maps to Asn106–Asp340. A disulfide bridge links Cys113 with Cys345. Cys120, Cys124, and Cys127 together coordinate [4Fe-4S] cluster. S-adenosyl-L-methionine is bound by residues Gly172–Glu173, Ser204, Ser227–His229, and Asn302. Cys345 functions as the S-methylcysteine intermediate in the catalytic mechanism.

The protein belongs to the radical SAM superfamily. RlmN family. [4Fe-4S] cluster is required as a cofactor.

It localises to the cytoplasm. It carries out the reaction adenosine(2503) in 23S rRNA + 2 reduced [2Fe-2S]-[ferredoxin] + 2 S-adenosyl-L-methionine = 2-methyladenosine(2503) in 23S rRNA + 5'-deoxyadenosine + L-methionine + 2 oxidized [2Fe-2S]-[ferredoxin] + S-adenosyl-L-homocysteine. The enzyme catalyses adenosine(37) in tRNA + 2 reduced [2Fe-2S]-[ferredoxin] + 2 S-adenosyl-L-methionine = 2-methyladenosine(37) in tRNA + 5'-deoxyadenosine + L-methionine + 2 oxidized [2Fe-2S]-[ferredoxin] + S-adenosyl-L-homocysteine. In terms of biological role, specifically methylates position 2 of adenine 2503 in 23S rRNA and position 2 of adenine 37 in tRNAs. This chain is Probable dual-specificity RNA methyltransferase RlmN, found in Desulfitobacterium hafniense (strain Y51).